We begin with the raw amino-acid sequence, 347 residues long: Protein-glutamate methylesterase/protein-glutamine glutaminase (347 aa).

The 118-residue stretch at 6-123 folds into the Response regulatory domain; it reads RVLVVDDSPT…HRPFGDLAEK (118 aa). D57 carries the 4-aspartylphosphate modification. In terms of domain architecture, CheB-type methylesterase spans 150–342; that stretch reads FRVGRKIVAI…EEILKLTAAR (193 aa). Active-site residues include S162, H188, and D284.

The protein belongs to the CheB family. In terms of processing, phosphorylated by CheA. Phosphorylation of the N-terminal regulatory domain activates the methylesterase activity.

The protein localises to the cytoplasm. It carries out the reaction [protein]-L-glutamate 5-O-methyl ester + H2O = L-glutamyl-[protein] + methanol + H(+). The catalysed reaction is L-glutaminyl-[protein] + H2O = L-glutamyl-[protein] + NH4(+). Functionally, involved in chemotaxis. Part of a chemotaxis signal transduction system that modulates chemotaxis in response to various stimuli. Catalyzes the demethylation of specific methylglutamate residues introduced into the chemoreceptors (methyl-accepting chemotaxis proteins or MCP) by CheR. Also mediates the irreversible deamidation of specific glutamine residues to glutamic acid. In Rhizobium etli (strain ATCC 51251 / DSM 11541 / JCM 21823 / NBRC 15573 / CFN 42), this protein is Protein-glutamate methylesterase/protein-glutamine glutaminase.